Consider the following 463-residue polypeptide: Lipase 6 (463 aa).

An N-terminal signal peptide occupies residues 1 to 16 (MRDLILFLSLLHTIFA). A disulfide bridge connects residues C112 and C285. Catalysis depends on S196, which acts as the Charge relay system. N-linked (GlcNAc...) asparagine glycosylation occurs at N231. Residues D348 and H381 each act as charge relay system in the active site. The cysteines at positions 364 and 409 are disulfide-linked. A glycan (N-linked (GlcNAc...) asparagine) is linked at N422.

It belongs to the AB hydrolase superfamily. Lipase family. Class Lip subfamily.

The protein localises to the secreted. The catalysed reaction is a triacylglycerol + H2O = a diacylglycerol + a fatty acid + H(+). In terms of biological role, secreted lipase that is able to hydrolyze both the neutral triacylglycerols and the monopalmitate ester Tween 40, allowing the use of hydrolyzed products as carbon sources. Has broad lipolytic activity, which may be important for colonization and subsequent infection, therefore contributing to the persistence and virulence in human tissue. In Candida albicans (strain SC5314 / ATCC MYA-2876) (Yeast), this protein is Lipase 6.